The primary structure comprises 115 residues: NADH-ubiquinone oxidoreductase chain 3 (115 aa).

Transmembrane regions (helical) follow at residues 3-23 (LMLVLLINTTISLVLVTIAFW), 55-75 (FFLVAITFLLFDLEIALLLPL), and 87-107 (VLIMALMLISILALGLAYEWI).

Belongs to the complex I subunit 3 family. In terms of assembly, core subunit of respiratory chain NADH dehydrogenase (Complex I) which is composed of 45 different subunits. Interacts with TMEM186. Interacts with TMEM242.

It is found in the mitochondrion inner membrane. It catalyses the reaction a ubiquinone + NADH + 5 H(+)(in) = a ubiquinol + NAD(+) + 4 H(+)(out). Core subunit of the mitochondrial membrane respiratory chain NADH dehydrogenase (Complex I) which catalyzes electron transfer from NADH through the respiratory chain, using ubiquinone as an electron acceptor. Essential for the catalytic activity of complex I. The sequence is that of NADH-ubiquinone oxidoreductase chain 3 from Oryctolagus cuniculus (Rabbit).